Here is a 372-residue protein sequence, read N- to C-terminus: Chaperone protein DnaJ (372 aa).

In terms of domain architecture, J spans 5 to 70; the sequence is SYYDILGVSK…KKRQAYDQFG (66 aa). Residues 140–218 form a CR-type zinc finger; sequence GREYKIEIPR…CGGQGLQEKR (79 aa). The Zn(2+) site is built by Cys153, Cys156, Cys170, Cys173, Cys192, Cys195, Cys206, and Cys209. CXXCXGXG motif repeat units lie at residues 153–160, 170–177, 192–199, and 206–213; these read CVDCNGSG, CPDCGGSG, CPTCRGKG, and CRSCGGQG.

It belongs to the DnaJ family. Homodimer. Requires Zn(2+) as cofactor.

Its subcellular location is the cytoplasm. Functionally, participates actively in the response to hyperosmotic and heat shock by preventing the aggregation of stress-denatured proteins and by disaggregating proteins, also in an autonomous, DnaK-independent fashion. Unfolded proteins bind initially to DnaJ; upon interaction with the DnaJ-bound protein, DnaK hydrolyzes its bound ATP, resulting in the formation of a stable complex. GrpE releases ADP from DnaK; ATP binding to DnaK triggers the release of the substrate protein, thus completing the reaction cycle. Several rounds of ATP-dependent interactions between DnaJ, DnaK and GrpE are required for fully efficient folding. Also involved, together with DnaK and GrpE, in the DNA replication of plasmids through activation of initiation proteins. The polypeptide is Chaperone protein DnaJ (Leptospira interrogans serogroup Icterohaemorrhagiae serovar copenhageni (strain Fiocruz L1-130)).